A 493-amino-acid polypeptide reads, in one-letter code: Glutamyl-tRNA(Gln) amidotransferase subunit A (493 aa).

Active-site charge relay system residues include lysine 79 and serine 159. Serine 183 acts as the Acyl-ester intermediate in catalysis.

Belongs to the amidase family. GatA subfamily. As to quaternary structure, heterotrimer of A, B and C subunits.

The enzyme catalyses L-glutamyl-tRNA(Gln) + L-glutamine + ATP + H2O = L-glutaminyl-tRNA(Gln) + L-glutamate + ADP + phosphate + H(+). Functionally, allows the formation of correctly charged Gln-tRNA(Gln) through the transamidation of misacylated Glu-tRNA(Gln) in organisms which lack glutaminyl-tRNA synthetase. The reaction takes place in the presence of glutamine and ATP through an activated gamma-phospho-Glu-tRNA(Gln). This is Glutamyl-tRNA(Gln) amidotransferase subunit A from Brucella canis (strain ATCC 23365 / NCTC 10854 / RM-666).